The chain runs to 93 residues: Cytochrome c oxidase polypeptide 6, mitochondrial (93 aa).

Residues 2–33 are Mitochondrial matrix-facing; that stretch reads STGNESYNLRYPKGFKGYPYNMYKLEGYGTPK. Residues 34–53 traverse the membrane as a helical segment; the sequence is GYITLIGVVATLTVSGLFFA. Over 54–93 the chain is Mitochondrial intermembrane; the sequence is KTRSNKREYPTHNKEWRAKTLAYAKETNADPIYQLPKDKI.

This sequence belongs to the cytochrome c oxidase IV family. As to quaternary structure, component of the cytochrome c oxidase (complex IV, CIV), a multisubunit enzyme composed of a catalytic core of 3 subunits and seevral supernumerary subunits. The complex exists as a monomer or a dimer and forms supercomplexes (SCs) in the inner mitochondrial membrane with ubiquinol-cytochrome c oxidoreductase (cytochrome b-c1 complex, complex III, CIII).

The protein localises to the mitochondrion inner membrane. It participates in energy metabolism; oxidative phosphorylation. Component of the cytochrome c oxidase, the last enzyme in the mitochondrial electron transport chain which drives oxidative phosphorylation. The respiratory chain contains 3 multisubunit complexes succinate dehydrogenase (complex II, CII), ubiquinol-cytochrome c oxidoreductase (cytochrome b-c1 complex, complex III, CIII) and cytochrome c oxidase (complex IV, CIV), that cooperate to transfer electrons derived from NADH and succinate to molecular oxygen, creating an electrochemical gradient over the inner membrane that drives transmembrane transport and the ATP synthase. Cytochrome c oxidase is the component of the respiratory chain that catalyzes the reduction of oxygen to water. Electrons originating from reduced cytochrome c in the intermembrane space (IMS) are transferred via the dinuclear copper A center (CU(A)) of subunit 2 and heme A of subunit 1 to the active site in subunit 1, a binuclear center (BNC) formed by heme A3 and copper B (CU(B)). The BNC reduces molecular oxygen to 2 water molecules using 4 electrons from cytochrome c in the IMS and 4 protons from the mitochondrial matrix. This chain is Cytochrome c oxidase polypeptide 6, mitochondrial (cxfA), found in Dictyostelium discoideum (Social amoeba).